The following is a 295-amino-acid chain: Keratin-like protein KRT222 (295 aa).

The IF rod domain occupies 1–150; that stretch reads MELSQLLNEI…HLLEKEEIRY (150 aa). Positions 2–150 form a coiled coil; the sequence is ELSQLLNEIR…HLLEKEEIRY (149 aa).

The protein belongs to the intermediate filament family.

The polypeptide is Keratin-like protein KRT222 (KRT222) (Homo sapiens (Human)).